Consider the following 67-residue polypeptide: Large ribosomal subunit protein bL35 (67 aa).

This sequence belongs to the bacterial ribosomal protein bL35 family.

The chain is Large ribosomal subunit protein bL35 from Sinorhizobium fredii (strain NBRC 101917 / NGR234).